Reading from the N-terminus, the 1260-residue chain is Agglutinin-like protein 1 (1260 aa).

Positions Met1–Ala17 are cleaved as a signal peptide. Disulfide bonds link Cys73/Cys150, Cys96/Cys112, Cys205/Cys298, and Cys227/Cys256. A run of 10 repeats spans residues Ser433–Glu468, Pro469–Glu504, Pro505–Glu540, Pro541–Glu576, Pro577–Glu612, Pro613–Glu648, Pro649–Glu684, Pro685–Glu720, Pro721–Glu756, and Pro757–Glu792. The interval Ser433 to Glu792 is 10 X 36 AA tandem repeats. The N-linked (GlcNAc...) asparagine glycan is linked to Asn471. Asn579 and Asn615 each carry an N-linked (GlcNAc...) asparagine glycan. 2 N-linked (GlcNAc...) asparagine glycosylation sites follow: Asn687 and Asn723. Asn820, Asn886, Asn918, and Asn973 each carry an N-linked (GlcNAc...) asparagine glycan. Polar residues-rich tracts occupy residues Pro896 to Asn918 and Lys964 to Asp979. Disordered regions lie at residues Pro896–Val924 and Ser954–Pro1226. Residues Ser980–Thr995 are compositionally biased toward low complexity. A 2-1 repeat occupies Thr983–Gly1043. A 2 X 26 AA approximate repeats region spans residues Thr983–Gly1152. The segment covering Val1002–Ser1062 has biased composition (polar residues). 2 N-linked (GlcNAc...) asparagine glycosylation sites follow: Asn1045 and Asn1068. Positions His1073–Leu1090 are enriched in polar residues. Residues Thr1091–Ala1110 are compositionally biased toward low complexity. The stretch at Thr1092 to Gly1152 is one 2-2 repeat. Over residues Val1111–Lys1154 the composition is skewed to polar residues. Low complexity-rich tracts occupy residues Ser1155–Ser1176 and Ser1197–Pro1226.

This sequence belongs to the ALS family. Post-translationally, N-glycosylated and O-glycosylated. The GPI-anchor is attached to the protein in the endoplasmic reticulum and serves to target the protein to the cell surface. There, the glucosamine-inositol phospholipid moiety is cleaved off and the GPI-modified mannoprotein is covalently attached via its lipidless GPI glycan remnant to the 1,6-beta-glucan of the outer cell wall layer.

Its subcellular location is the cell membrane. It is found in the secreted. The protein localises to the cell wall. Its function is as follows. Major cell surface adhesion protein which mediates both yeast-to-host tissue adherence and yeast aggregation. Acts as a downstream effector of the EFG1 regulatory pathway. Required for rapamycin-induced aggregation of C.albicans. Binds glycans and mediates adherence to endothelial and epithelial cells, thereby playing an important role in the pathogenesis of C.albicans infections. In Candida albicans (Yeast), this protein is Agglutinin-like protein 1 (ALS1).